Consider the following 330-residue polypeptide: Olfactory receptor 5P73 (330 aa).

Residues 1-28 (MAFLEDGNHTTVTEFFLLGLTDDPVLRD) lie on the Extracellular side of the membrane. The N-linked (GlcNAc...) asparagine glycan is linked to Asn-8. The helical transmembrane segment at 29–49 (ILFIIILCIYLVTVSGNLSTI) threads the bilayer. Topologically, residues 50–57 (LLIRVSSQ) are cytoplasmic. Residues 58 to 78 (LHHPMYFILSHLASVDIGISS) traverse the membrane as a helical segment. The Extracellular portion of the chain corresponds to 79–102 (SVTPNMLATFLVKQNTISYIGCSI). Cys-100 and Cys-192 are oxidised to a cystine. Residues 103–123 (QFTSAAFFGTVECFLLATMAY) traverse the membrane as a helical segment. At 124 to 136 (DRFVAICNPLLYS) the chain is on the cytoplasmic side. The helical transmembrane segment at 137-157 (TKMSTEACIQLVVGSYIQGFL) threads the bilayer. Residues 158–199 (NASFFTLSFFSLFFCGPNRINDFYCDFAPLLELSCSDVTVAV) lie on the Extracellular side of the membrane. A helical transmembrane segment spans residues 200–220 (VITSISAGFITLTTVFVIAIS). Residues 221-240 (YSCIFITIMKMHSTESRCKA) lie on the Cytoplasmic side of the membrane. A helical transmembrane segment spans residues 241 to 261 (FSTCTSHLTAVILFYGTAIFI). The Extracellular portion of the chain corresponds to 262–274 (YVMPKSSYSTDQN). Residues 275–295 (KVLSIFYTVVIPMLNPLIYSL) form a helical membrane-spanning segment. Topologically, residues 296–330 (RNNEIKEALKRHLGKKVFSYGNLFCKTHYNHNYPV) are cytoplasmic.

The protein belongs to the G-protein coupled receptor 1 family.

The protein localises to the cell membrane. Its function is as follows. Potential odorant receptor. The chain is Olfactory receptor 5P73 from Mus musculus (Mouse).